Here is a 353-residue protein sequence, read N- to C-terminus: B1 bradykinin receptor (353 aa).

Residues 1–40 (MASSWPPLELQSSNQSQLFPQNATACDNAPEAWDLLHRVL) are Extracellular-facing. Residues Asn-14 and Asn-22 are each glycosylated (N-linked (GlcNAc...) asparagine). A helical membrane pass occupies residues 41 to 64 (PTFIISICFFGLLGNLFVLLVFLL). Topologically, residues 65–73 (PRRQLNVAE) are cytoplasmic. The helical transmembrane segment at 74–98 (IYLANLAASDLVFVLGLPFWAENIW) threads the bilayer. Residues 99-111 (NQFNWPFGALLCR) are Extracellular-facing. Cys-110 and Cys-189 form a disulfide bridge. The chain crosses the membrane as a helical span at residues 112–133 (VINGVIKANLFISIFLVVAISQ). At 134-155 (DRYRVLVHPMASRRQQRRRQAR) the chain is on the cytoplasmic side. The chain crosses the membrane as a helical span at residues 156–178 (VTCVLIWVVGGLLSIPTFLLRSI). The Extracellular segment spans residues 179–199 (QAVPDLNITACILLLPHEAWH). An N-linked (GlcNAc...) asparagine glycan is attached at Asn-185. The chain crosses the membrane as a helical span at residues 200–226 (FARIVELNILGFLLPLAAIVFFNYHIL). The Cytoplasmic segment spans residues 227–247 (ASLRTREEVSRTRCGGRKDSK). Residues 248-272 (TTALILTLVVAFLVCWAPYHFFAFL) traverse the membrane as a helical segment. At 273–291 (EFLFQVQAVRGCFWEDFID) the chain is on the extracellular side. The chain crosses the membrane as a helical span at residues 292–314 (LGLQLANFFAFTNSSLNPVIYVF). Topologically, residues 315–353 (VGRLFRTKVWELYKQCTPKSLAPISSSHRKEIFQLFWRN) are cytoplasmic. The S-palmitoyl cysteine moiety is linked to residue Cys-330.

The protein belongs to the G-protein coupled receptor 1 family. Bradykinin receptor subfamily. BDKRB1 sub-subfamily.

It is found in the cell membrane. Its function is as follows. This is a receptor for bradykinin. Could be a factor in chronic pain and inflammation. The chain is B1 bradykinin receptor (BDKRB1) from Homo sapiens (Human).